The sequence spans 254 residues: 3-dehydroquinate dehydratase (254 aa).

3-dehydroquinate-binding positions include 47–49 (EWR) and R83. H144 acts as the Proton donor/acceptor in catalysis. Catalysis depends on K171, which acts as the Schiff-base intermediate with substrate. R214, S233, and Q237 together coordinate 3-dehydroquinate.

Belongs to the type-I 3-dehydroquinase family. As to quaternary structure, homodimer.

The enzyme catalyses 3-dehydroquinate = 3-dehydroshikimate + H2O. The protein operates within metabolic intermediate biosynthesis; chorismate biosynthesis; chorismate from D-erythrose 4-phosphate and phosphoenolpyruvate: step 3/7. Involved in the third step of the chorismate pathway, which leads to the biosynthesis of aromatic amino acids. Catalyzes the cis-dehydration of 3-dehydroquinate (DHQ) and introduces the first double bond of the aromatic ring to yield 3-dehydroshikimate. The chain is 3-dehydroquinate dehydratase from Clostridium botulinum (strain Eklund 17B / Type B).